The chain runs to 181 residues: Adenine phosphoribosyltransferase (181 aa).

Belongs to the purine/pyrimidine phosphoribosyltransferase family. Homodimer.

The protein localises to the cytoplasm. It catalyses the reaction AMP + diphosphate = 5-phospho-alpha-D-ribose 1-diphosphate + adenine. Its pathway is purine metabolism; AMP biosynthesis via salvage pathway; AMP from adenine: step 1/1. Functionally, catalyzes a salvage reaction resulting in the formation of AMP, that is energically less costly than de novo synthesis. The sequence is that of Adenine phosphoribosyltransferase from Neorhizobium galegae (Rhizobium galegae).